The sequence spans 1270 residues: Myosin-3 (1270 aa).

The disordered stretch occupies residues 1–20 (MAVIKKGARRKDVKEPKKRS). Positions 36–715 (VGVSDLTLLS…SLFALEDMRD (680 aa)) constitute a Myosin motor domain. An ATP-binding site is contributed by 129-136 (GESGAGKT). The residue at position 357 (Ser-357) is a Phosphoserine. The interval 404-486 (SIGILDIYGF…PGILAAMNDS (83 aa)) is actin-binding. IQ domains are found at residues 719-739 (YNMA…RIDA) and 740-765 (AIKI…YGTK). In terms of domain architecture, TH1 spans 771-961 (KERRSMSLLG…TIYVRRGHPA (191 aa)). 3 disordered regions span residues 951–1015 (STIY…QKPV), 1029–1136 (YNPK…GSSS), and 1215–1270 (VQFG…DDDW). Positions 980 to 1000 (IKSKKSKHKSTHKHTHSHRSH) are enriched in basic residues. Positions 1066–1078 (KKASSSHKSSSAK) are enriched in low complexity. Positions 1089–1098 (GVEKNKEPLK) are enriched in basic and acidic residues. Residues 1107-1116 (PIPPPPPPMG) are compositionally biased toward pro residues. In terms of domain architecture, SH3 spans 1118-1180 (PKDPKFEAAY…PTAYMTPYKD (63 aa)). Positions 1215 to 1234 (VQFGSATVGPTSDNQSNPVG) are enriched in polar residues. Over residues 1256–1270 (ADDDDNDDGDDDDDW) the composition is skewed to acidic residues.

The protein belongs to the TRAFAC class myosin-kinesin ATPase superfamily. Myosin family. Interacts (via myosin motor domain) with SHE4; this interaction is important for proper localization and may regulate the interaction of the motor domain with actin. Interacts (via SH3 domain) with VRP1; this interaction is required for localization to sites of polarized growth and may regulate the interaction of the tail domain with actin. Interacts (via SH3 domain) with PAN1; this interaction is important for late stages of endocytopsis. Interacts (via SH3 domain) with BBC1 and LAS17. Interacts (via C-terminal acidic tail) with ARC19 and ARC40; ARC19 and ARC40 are Arp2/3 complex subunits. Phosphorylation of the TEDS site (Ser-357) is required for the polarization of the actin cytoskeleton and for ligand-induced, but not for constitutive internalization of STE2. Phosphorylation probably activates the myosin-I ATPase. Ser-357 is phosphorylated by CLA4 and STE20 in vitro.

The protein resides in the cytoplasm. The protein localises to the cytoskeleton. Its subcellular location is the actin patch. In terms of biological role, one of two redundant type-I myosins implicated in the organization of the actin cytoskeleton. Required for proper actin cytoskeleton polarization and for the internalization step in endocytosis. At the cell cortex, assembles in patch-like structures together with proteins from the actin-polymerizing machinery and promotes actin assembly. Functions redundantly with LAS17 as actin nucleation-promoting factor (NPF) for the Arp2/3 complex. Motor domain phosphorylation by PAK kinases CLA4 and STE20 promotes CDC42-regulated actin assembly. Functions together with the NPF PAN1 in late stages of endocytosis. Motor domain phosphorylation by PDK1 kinases PKH1 and PKH2, and by SGK kinases YPK1 and YPK2, promotes ligand-induced, but not constitutive endocytosis of the G protein-coupled receptor STE2. This is Myosin-3 (MYO3) from Saccharomyces cerevisiae (strain YJM789) (Baker's yeast).